The following is a 393-amino-acid chain: Probable acetyl-CoA acetyltransferase (393 aa).

Thr-2 is a propeptide (removed; alternate). Cys-88 functions as the Acyl-thioester intermediate in the catalytic mechanism. Residues His-349 and Cys-379 each act as proton acceptor in the active site.

This sequence belongs to the thiolase-like superfamily. Thiolase family.

It carries out the reaction 2 acetyl-CoA = acetoacetyl-CoA + CoA. This chain is Probable acetyl-CoA acetyltransferase (fadA4), found in Mycobacterium tuberculosis (strain ATCC 25618 / H37Rv).